Consider the following 265-residue polypeptide: GTP cyclohydrolase FolE2 (265 aa).

This sequence belongs to the GTP cyclohydrolase IV family.

It catalyses the reaction GTP + H2O = 7,8-dihydroneopterin 3'-triphosphate + formate + H(+). Its pathway is cofactor biosynthesis; 7,8-dihydroneopterin triphosphate biosynthesis; 7,8-dihydroneopterin triphosphate from GTP: step 1/1. Converts GTP to 7,8-dihydroneopterin triphosphate. The chain is GTP cyclohydrolase FolE2 from Magnetococcus marinus (strain ATCC BAA-1437 / JCM 17883 / MC-1).